The primary structure comprises 203 residues: Thymidylate kinase (203 aa).

Residue 7-14 (GGEGAGKT) coordinates ATP.

This sequence belongs to the thymidylate kinase family.

It carries out the reaction dTMP + ATP = dTDP + ADP. Its function is as follows. Phosphorylation of dTMP to form dTDP in both de novo and salvage pathways of dTTP synthesis. The protein is Thymidylate kinase (tmk) of Chlamydia trachomatis serovar D (strain ATCC VR-885 / DSM 19411 / UW-3/Cx).